Consider the following 1002-residue polypeptide: TOG array regulator of axonemal microtubules protein 2 (1002 aa).

Disordered regions lie at residues 54–74 (SSVL…EDQS), 131–214 (KRRL…SAQE), 332–351 (ETRS…KVQV), 402–421 (PLRG…PRRN), and 426–450 (LQRK…GFAR).

It belongs to the Crescerin family.

This is TOG array regulator of axonemal microtubules protein 2 (Togaram2) from Mus musculus (Mouse).